The primary structure comprises 670 residues: Septation protein 7 (670 aa).

Residues 33 to 357 (KGIKFTFMVV…ETYRTERLTK (325 aa)) form the Septin-type G domain. A G1 motif region spans residues 43-50 (GESGTGKT). GTP-binding positions include 43–50 (GESGTGKT), Gly137, 217–225 (KADSFTLNE), and Arg306. Positions 134-137 (DTPG) are G3 motif. Residues 216–219 (GKAD) are G4 motif. 2 disordered regions span residues 383–513 (LNDS…QRNQ) and 574–670 (LNRQ…VSNH). Positions 395–404 (NNNNNNNNNN) are enriched in low complexity. Over residues 405–421 (ASTIPSMSNLAQLTTST) the composition is skewed to polar residues. Composition is skewed to low complexity over residues 433 to 446 (SITS…KSTS) and 463 to 473 (SSFTSSTSTVS). Residues 472 to 606 (VSLEGGEKEG…SVQSGGVDDG (135 aa)) adopt a coiled-coil conformation. Residues 476–487 (GGEKEGGHHDRG) are compositionally biased toward basic and acidic residues. A compositionally biased stretch (low complexity) spans 489-500 (NSTSTNNNNNNN). Residues 631-645 (QSHEYDNSEYHHDDS) are compositionally biased toward basic and acidic residues.

The protein belongs to the TRAFAC class TrmE-Era-EngA-EngB-Septin-like GTPase superfamily. Septin GTPase family. As to quaternary structure, component of the septin complex which consists of CDC3, CDC10, CDC11, CDC12 and probably SEP7. The purified septin complex appeared to have a stoichiometry of 2 CDC3, 1 to 2 CDC10, 1 CDC11, 2 CDC12, and 1 or none SEP7 subunit. Induction of hyphal growth brings about important modifications in septin ring dynamics, because the rings were found in a different state from those of yeast cells. This hyphal-specific state contains a core of stable septins (SEP7, CDC3, and CDC12), and it shows a high CDC10 turnover between the ring and the cytoplasm. Interacts with GIN4. In terms of processing, phosphorylated by GIN4 which stabilizes the GIN4-SEP7 interaction.

The protein localises to the bud neck. Functionally, septins are GTPases involved in cytokinesis that assemble early in the cell cycle as a patch at the incipient bud site and form a ring before bud emergence, which transforms into an hour-glass shaped collar of cortical filaments that spans both sides of the mother-bud neck. This collar persists until just before cytokinesis, when it splits into two rings that occupy opposite sides of the neck. The septins at the bud neck serve as a structural scaffold that recruits different components involved in diverse processes at specific stages during the cell cycle. Many proteins bind asymmetrically to the septin collar. The septin assembly is regulated by protein kinase GIN4. Septins are also involved in cell morphogenesis, chlamydospores morphogenesis, bud site selection, chitin deposition, cell cycle regulation, cell compartmentalization and spore wall formation. SEP7 is required to convert hyphal septin rings into the hyphal-specific state and is necessary for CDC10 turnover during hyphal growth. This is Septation protein 7 (SEP7) from Candida albicans (strain SC5314 / ATCC MYA-2876) (Yeast).